We begin with the raw amino-acid sequence, 832 residues long: MKDSQSDIIELCNKLNEATKLKRNGKSIKLTNFVSNTQIKLDSWKFLEWDYGKPSVQLPIQARGLFTLNNDTIAVRGYDKFFNVEEKPFTKETNLKTSTHGPYEVTLKENGCIIFISGLSTGDIVVCSKHSTGDRIDDNESDKTTTATATATAPTRNHAKQGEFELLQQFDGDQQKVKQLAHYLYENNLTVVAELCDDEFEEHVLPYPKDKSGLYVHGLNYNTITFKTLPMDQVLQFAKEWGFKYVSYLTYDNADELFKFLHKCSETGTYNGREIEGFVIRCHRQSHTNGDTDGDCFFFKYKFEQPYLLYRQFREVTKQLLNGTPINSIKIKKNKPITKKYLQFVEKLFEQEPEIARNFENGFDIIKVRQLFLQSLNETNGMNLLSIDSELSDQLKNLALANGNEGLSTTTKYIFVPIATIGCGKTTVFNTLNNLFPQWTHIQNDNISKKAKLKICDLTLLALEDDDQSVVLFDRNNSASRERRQIFTTIDQKRDEHLDDTVDLKYIAINFIPEDLSEEELWDITYNRVIQRGDNHQSIKSQSDENLVESVMKGFIQRYQPINTSRSPDDQFDHVIHLKLSKDENSSKSSLENVRIIIDDLVQNFPDLIKEKPADELINECFQKALDYKPTFVKNMTANTIKKDPTYYGIAMHYSSILENLEIVSHNEHFQNIKSHIQTEFHVTLGHIASSKQDKAGRVKWKKLVKTLGKGDPNKPKSALKFFADVKLLQIVINTDKLACIKVEILKIYDTNDVLQSEIEPINKQLHITIGCIPPATAVESNITLEELYDNPDEQELKPDGTYKCGDDTLHVFNFDNPDLKLFSQQLFVAYQ.

The N6-AMP-lysine intermediate role is filled by Lys108.

It belongs to the TRL1 family.

The catalysed reaction is ATP + (ribonucleotide)n-3'-hydroxyl + 5'-phospho-(ribonucleotide)m = (ribonucleotide)n+m + AMP + diphosphate.. In terms of biological role, one of the two proteins required for the splicing of precursor tRNA molecules containing introns. The ligation activity requires three enzymatic activities: phosphorylation of the 5' terminus of the 3' half-tRNA in the presence of ATP, opening of the 2'3'-cyclic phosphodiester bond of the 5' half-tRNA leaving a 2'-phosphomonoester and ligation of the two tRNA halves in an ATP-dependent reaction. This Candida albicans (strain SC5314 / ATCC MYA-2876) (Yeast) protein is tRNA ligase (LIG1).